Here is a 362-residue protein sequence, read N- to C-terminus: Oxygen-dependent coproporphyrinogen-III oxidase (362 aa).

The interval 12–31 (RQENDQSTPQLELPPTDSRD) is disordered. S118 contributes to the substrate binding site. H122 and H132 together coordinate a divalent metal cation. H132 serves as the catalytic Proton donor. 134-136 (NYR) contacts substrate. Residues H166 and H196 each contribute to the a divalent metal cation site. Positions 286-321 (YVEFNLVWDRGTIFGLQTNGRTESILMSLPPLVRWE) are important for dimerization.

This sequence belongs to the aerobic coproporphyrinogen-III oxidase family. As to quaternary structure, homodimer. The cofactor is a divalent metal cation.

It localises to the cytoplasm. The catalysed reaction is coproporphyrinogen III + O2 + 2 H(+) = protoporphyrinogen IX + 2 CO2 + 2 H2O. The protein operates within porphyrin-containing compound metabolism; protoporphyrin-IX biosynthesis; protoporphyrinogen-IX from coproporphyrinogen-III (O2 route): step 1/1. Involved in the heme and chlorophyll biosynthesis. Catalyzes the aerobic oxidative decarboxylation of propionate groups of rings A and B of coproporphyrinogen-III to yield the vinyl groups in protoporphyrinogen-IX. This chain is Oxygen-dependent coproporphyrinogen-III oxidase, found in Synechococcus sp. (strain CC9902).